Reading from the N-terminus, the 579-residue chain is DNA ligase 1 (579 aa).

Glutamate 244 contributes to the ATP binding site. Lysine 246 functions as the N6-AMP-lysine intermediate in the catalytic mechanism. ATP is bound by residues arginine 251, arginine 266, glutamate 296, phenylalanine 342, arginine 419, and lysine 425.

Belongs to the ATP-dependent DNA ligase family. It depends on Mg(2+) as a cofactor.

It catalyses the reaction ATP + (deoxyribonucleotide)n-3'-hydroxyl + 5'-phospho-(deoxyribonucleotide)m = (deoxyribonucleotide)n+m + AMP + diphosphate.. DNA ligase that seals nicks in double-stranded DNA during DNA replication, DNA recombination and DNA repair. This Methanosarcina mazei (strain ATCC BAA-159 / DSM 3647 / Goe1 / Go1 / JCM 11833 / OCM 88) (Methanosarcina frisia) protein is DNA ligase 1.